Reading from the N-terminus, the 917-residue chain is MSSTLSEGQTLIKKSLSPSKATSTNNKGHVFVEPQTPLKNSNKASTSEAALPETLKIMGPLTTPTKVLDAPSSDPWTPTSNLKMLISAASPEIRNREKERAVDSSESENSQETEQGEEVEKLHISRKDKSLGLLCYKFLARYPNYPNPALNNGISLDDVAAELHVERRRIYDIMNVLESLNMVSRLAKNRYTWHGRVKLAQTLAVLKRAGKENRYEQLMQQIRQRSQEREEREFDLDGEEKENEEMSSFEVDGDSGLADLPGADSKAASANSRKDKSLRVMSQKFVMLFLVSSPPVVSLDVAAKILIGEDHVVDQDKNKFKTKIRRLYDIANVLSSLELIKKVHVTEDKGRKPAFKWTGPEDIPSPKDLEISTTSSAPKPLESRSSVENCAKNLFSSPGTKRGFTRHHSLVKLVKSIQDDRRKINSAPSSPIKMTGDSADSDFYTTKMAHLAAICKKHLDEQSADGRPNNAVTDSSQSSKQPESTSASNHGPPGMQIPVLPAGAISYLPTKCSPIIPLLIPQHQTGGPYAVYMHPTSLRPQPTSLAVRSMTFESPVGANAKTSPATLTSNNQTNQSSSYGKEQTSPVNLKRASGEKSSVGSPSKMQRTEPKSVSPKLCEILQARLKARRGALTSNRPSARALHLEFSKPSESQPTVQTGTASLEHSLETFLEKEEKSQTSDNEAGLTPVRQPHSQPQKLSAPFQDMVLPSGPIHTETLIPAGYLIPISQQSIVNFREPQCSNESSKASTPTYNIYHTPTAGSRPAFPQEVTPTRLPLHRIPPISPFPSHGHRLHSPSPAILNFTLQNLGLIPGSVTPNPHTPEQSSSLQSPHPGLPHQGMIFVKPMSPARALQQTSIHGQPVTLISIPQALVTTPKGGQAFQQSFFHTPVSFPTVNTTAPKKIYIPQRKLDVSPEEI.

A disordered region spans residues 1 to 122 (MSSTLSEGQT…TEQGEEVEKL (122 aa)). 2 stretches are compositionally biased toward polar residues: residues 16–27 (LSPSKATSTNNK) and 37–48 (PLKNSNKASTSE). Positions 93-103 (IRNREKERAVD) are enriched in basic and acidic residues. Residues 105–117 (SESENSQETEQGE) are compositionally biased toward acidic residues. The DNA-binding element occupies 126 to 195 (RKDKSLGLLC…LAKNRYTWHG (70 aa)). Disordered regions lie at residues 221-252 (QIRQ…FEVD), 353-386 (PAFK…SRSS), 461-497 (EQSA…GMQI), 556-615 (VGAN…SVSP), 671-698 (LEKE…QPQK), and 813-834 (GSVT…PHPG). The span at 233 to 252 (EFDLDGEEKENEEMSSFEVD) shows a compositional bias: acidic residues. A DNA-binding region spans residues 273-359 (RKDKSLRVMS…GRKPAFKWTG (87 aa)). Positions 371 to 386 (ISTTSSAPKPLESRSS) are enriched in polar residues. 2 stretches are compositionally biased toward low complexity: residues 475–488 (SSQS…TSAS) and 568–578 (TSNNQTNQSSS). The segment covering 595–605 (EKSSVGSPSKM) has biased composition (polar residues). The segment covering 815 to 830 (VTPNPHTPEQSSSLQS) has biased composition (polar residues).

The protein belongs to the E2F/DP family. As to quaternary structure, homodimer and heterodimer: mainly forms homodimers and, to a lesser extent, heterodimers with e2f7.

It localises to the nucleus. Functionally, atypical E2F transcription factor that participates in various processes such as angiogenesis and polyploidization of specialized cells. Mainly acts as a transcription repressor that binds DNA independently of DP proteins and specifically recognizes the E2 recognition site 5'-TTTC[CG]CGC-3'. Directly represses transcription of classical E2F transcription factors such as e2f1. Acts as a regulator of S-phase by recognizing and binding the E2-related site 5'-TTCCCGCC-3' and mediating repression of G1/S-regulated genes. Acts as a promoter of sprouting angiogenesis, possibly by acting as a transcription activator and promoting expression of vegfa. This is Transcription factor E2F8 (e2f8) from Danio rerio (Zebrafish).